A 1834-amino-acid chain; its full sequence is Sodium channel protein type 4 subunit alpha (1834 aa).

The Cytoplasmic segment spans residues 1–131; that stretch reads MASSSLPNLV…RSAIKVLIHS (131 aa). The I repeat unit spans residues 113–448; the sequence is MLSPFSIIRR…VVTMAYAEQN (336 aa). The helical transmembrane segment at 132–150 threads the bilayer; sequence LFSMFIMITILPNCVVMTM. The Extracellular segment spans residues 151-157; sequence SDPPPWP. The chain crosses the membrane as a helical span at residues 158–178; it reads IHVENTFTGINTFESLIKMLA. Over 179-192 the chain is Cytoplasmic; sequence RGFCIDDFTFLRDP. The helical transmembrane segment at 193–210 threads the bilayer; sequence WNWLDFSVIMMAYLTEFV. Residues 211–216 lie on the Extracellular side of the membrane; it reads DLGNIS. A glycan (N-linked (GlcNAc...) asparagine) is linked at Asn214. The helical transmembrane segment at 217 to 233 threads the bilayer; it reads ALRTFRVLRALKTITVI. Residues 234–252 are Cytoplasmic-facing; sequence PGLKTIVGALIQSVKKLSD. Residues 253–272 form a helical membrane-spanning segment; that stretch reads VMILTVFCLSVFALVGLQLF. At 273–385 the chain is on the extracellular side; the sequence is MGNLRQKCVR…PNYGYTSHDT (113 aa). Cys280 and Cys354 are disulfide-bonded. N-linked (GlcNAc...) asparagine glycans are attached at residues Asn288, Asn291, Asn297, Asn303, Asn309, Asn327, and Asn356. Cys363 and Cys369 are disulfide-bonded. Positions 386-410 form an intramembrane region, pore-forming; it reads FSWAFLALFRLMIQDYWENLFQLTL. Residues 411–417 are Extracellular-facing; that stretch reads RAAGKTY. A helical membrane pass occupies residues 418-438; it reads MIFFVVIIFLGSFYLINLILA. Residues 439 to 572 are Cytoplasmic-facing; it reads VVTMAYAEQN…NIIHLIVMDP (134 aa). Positions 486-525 are disordered; the sequence is EGGEAGGDPAHSKDCNGSLDTSPGEKGPPRQSCSADSGVS. An II repeat occupies 554 to 826; sequence CCTPWVKFKN…QISSWPIKLG (273 aa). Residues 573–591 traverse the membrane as a helical segment; the sequence is FVDLGITICIVLNTLFMAM. Residues 592 to 602 lie on the Extracellular side of the membrane; the sequence is EHYPMTEHFDK. Residues 603-622 form a helical membrane-spanning segment; sequence VLTVGNLVFTGIFTAEMVLK. At 623 to 636 the chain is on the cytoplasmic side; sequence LIALDPYEYFQQGW. A helical transmembrane segment spans residues 637 to 656; it reads NVFDSIIVTLSWVELGLVNV. At 657-658 the chain is on the extracellular side; the sequence is KG. The helical transmembrane segment at 659 to 676 threads the bilayer; that stretch reads LSVLRSFRLVRSLKLAKS. Topologically, residues 677–692 are cytoplasmic; that stretch reads WPTLNMFIRIIGNSGG. Residues 693–711 form a helical membrane-spanning segment; the sequence is GLGNLTLVLAIIVVNFSVV. The Extracellular portion of the chain corresponds to 712 to 740; that stretch reads GMQLFGKNYKECVCKNASDCALPRWKMCD. An intrachain disulfide couples Cys725 to Cys731. Residues 741 to 761 constitute an intramembrane region (pore-forming); that stretch reads FFHSFLIVLRILCGEWIEPMW. Residues 762–772 are Extracellular-facing; that stretch reads GFMEVAGQAMF. The chain crosses the membrane as a helical span at residues 773 to 791; that stretch reads LTVLLMVMVNGNLVDLDLF. At 792–1029 the chain is on the cytoplasmic side; the sequence is LALLLNPLNS…ACFKIVEHHW (238 aa). Disordered regions lie at residues 853–886 and 929–989; these read GDPG…KDLK and SDLE…QPEE. Over residues 860–869 the composition is skewed to acidic residues; the sequence is EAGEAEESAP. Residues 870–886 show a composition bias toward basic and acidic residues; that stretch reads EDEKKEPPPEDDDKDLK. Acidic residues-rich tracts occupy residues 929-945 and 972-989; these read SDLE…FSEP and EDPE…QPEE. The III repeat unit spans residues 1010–1323; it reads RGKMWWTLRR…KKYYNAMKKL (314 aa). Residues 1030-1047 traverse the membrane as a helical segment; that stretch reads FKTFNSSLILLNSGTLAF. The Extracellular segment spans residues 1048–1060; it reads EDIYIEQRRVIRT. The chain crosses the membrane as a helical span at residues 1061–1079; the sequence is ILEYADKVFTYIFIMEMLL. The Cytoplasmic portion of the chain corresponds to 1080–1093; that stretch reads KWVAYGFKVYFTNA. A helical membrane pass occupies residues 1094–1112; that stretch reads WCWLDFLIVDVSIISLVAN. Topologically, residues 1113–1120 are extracellular; the sequence is WLGYSELG. The chain crosses the membrane as a helical span at residues 1121 to 1139; that stretch reads PIKSLRTLRALRPLRALSR. Over 1140–1156 the chain is Cytoplasmic; it reads FEGMRVVVNALLGAIPS. Residues 1157–1176 form a helical membrane-spanning segment; that stretch reads IMNVLLVCLIFWVIFSIMGV. The Extracellular portion of the chain corresponds to 1177-1227; it reads NLFAAKIYYFINTTTSERFDISGVNNKSECESLIHTGQVRWLNVKVNYDNV. 2 N-linked (GlcNAc...) asparagine glycosylation sites follow: Asn1188 and Asn1202. The segment at residues 1228–1249 is an intramembrane region (pore-forming); it reads GLGYLSLLQVATFKGWMDIMYS. The Extracellular portion of the chain corresponds to 1250 to 1266; the sequence is AVDSREQEEQPQYEVNI. Residues 1267-1288 traverse the membrane as a helical segment; it reads YMYLYFVIFIIFGSFFTINSLI. Residues 1289–1351 lie on the Cytoplasmic side of the membrane; the sequence is RLIIVNFNQQ…MVYDFVTKQV (63 aa). Residues 1307-1309 form an important for rapid channel inactivation region; the sequence is IFM. One copy of the IV repeat lies at 1332 to 1630; the sequence is IPRPQNKIQG…WEKFGPDATQ (299 aa). Residues 1352-1369 traverse the membrane as a helical segment; that stretch reads FDITIMILICLNMVTMMV. The Extracellular segment spans residues 1370-1380; the sequence is ETDDQSQLKVD. A helical membrane pass occupies residues 1381–1399; it reads ILYNINMVFIIVFTGECVL. At 1400–1411 the chain is on the cytoplasmic side; it reads KMFALRQNYFTV. The chain crosses the membrane as a helical span at residues 1412 to 1429; sequence GWNIFDFVVVILSIVGLA. Over 1430 to 1442 the chain is Extracellular; sequence LSDLIQKYFVSPT. A helical membrane pass occupies residues 1443–1459; that stretch reads LFRVIRLARIGRVLRLI. The Cytoplasmic segment spans residues 1460 to 1478; the sequence is RGAKGIRTLLFALMMSLPA. Residues 1479–1496 traverse the membrane as a helical segment; the sequence is LFNIGLLLILVMFIYSIF. Over 1497–1518 the chain is Extracellular; sequence GMSNFAYVKKESGIDDMFNFET. Residues 1519 to 1541 constitute an intramembrane region (pore-forming); the sequence is FGNSIICLFEITTSAGWDGLLNP. Over 1542 to 1571 the chain is Extracellular; it reads ILNSGPPDCDPTLENPGTSVRGDCGNPSIG. An intrachain disulfide couples Cys1550 to Cys1565. A helical membrane pass occupies residues 1572-1594; sequence ICFFCSYIIISFLIVVNMYIAII. Over 1595 to 1834 the chain is Cytoplasmic; that stretch reads LENFNVATEE…LHPGVKESLV (240 aa). One can recognise an IQ domain in the interval 1724-1753; that stretch reads EEVCAIKIQRAYRRHLLQRSVKQASYMYRH. The disordered stretch occupies residues 1776–1834; that stretch reads MYGRENGNSGVQNKGEERGSTGDAGPTMGLTPINPSDSALPPSPPPGLPLHPGVKESLV.

This sequence belongs to the sodium channel (TC 1.A.1.10) family. Nav1.4/SCN4A subfamily. In terms of assembly, the Nav1.4 voltage-gated sodium channel consists of an ion-conducting alpha subunit SCN4A which is functional on its own and a regulatory beta subunit SCN1B. SCN1B strongly enhances the presence of SCN4A at the cell surface. SCN1B is also required for rapid channel inactivation and recovery after inactivation. It prevents the decrease of channel activity in response to repetitive, high-frequency depolarizations. Interacts with the syntrophins SNTA1, SNTB1 and SNTB2 (via PDZ domain); probably links SCN4A to the actin cytoskeleton and the extracellular matrix via the dystrophin-associated protein complex and regulates its localization in muscle cells. Interacts with TMEM233; probable regulator of the channel.

The protein localises to the cell membrane. The catalysed reaction is Na(+)(in) = Na(+)(out). Functionally, pore-forming subunit of Nav1.4, a voltage-gated sodium (Nav) channel that directly mediates the depolarizing phase of action potentials in excitable membranes. Navs, also called VGSCs (voltage-gated sodium channels) or VDSCs (voltage-dependent sodium channels), operate by switching between closed and open conformations depending on the voltage difference across the membrane. In the open conformation they allow Na(+) ions to selectively pass through the pore, along their electrochemical gradient. The influx of Na+ ions provokes membrane depolarization, initiating the propagation of electrical signals throughout cells and tissues. Highly expressed in skeletal muscles, Nav1.4 generates the action potential crucial for muscle contraction. The polypeptide is Sodium channel protein type 4 subunit alpha (Equus caballus (Horse)).